The following is a 46-amino-acid chain: Large ribosomal subunit protein bL33B (46 aa).

This sequence belongs to the bacterial ribosomal protein bL33 family.

In Mycoplasmopsis pulmonis (strain UAB CTIP) (Mycoplasma pulmonis), this protein is Large ribosomal subunit protein bL33B (rpmG2).